Here is a 62-residue protein sequence, read N- to C-terminus: Omega-lycotoxin-Am1e (62 aa).

A propeptide spanning residues 1–15 (EDEVEETLPVAEEGR) is cleaved from the precursor. Cystine bridges form between Cys19/Cys34, Cys26/Cys39, Cys33/Cys59, and Cys41/Cys57.

It belongs to the neurotoxin omega-lctx family. In terms of tissue distribution, expressed by the venom gland.

The protein localises to the secreted. Its function is as follows. Modulates Cav2.1/CACNA1A voltage-gated calcium channels (P/Q-type currents) in rat cerebellar Purkinje cells and hippocampal CA1-CA3 neurons. At saturating concentrations (&gt;10 nM) decelerates activation kinetics and slightly increases peak amplitude without affecting deactivation kinetics. In vivo, does not cause death when intravenously injected into mice. In rat models, through its activity on Cav2.1/CACNA1A, has an ameliorative effect on memory defects provoked by hyperstimulation of N-methyl-D-aspartate receptors (NMDARs) in the hippocampus. This is Omega-lycotoxin-Am1e from Alopecosa marikovskyi (Wolf spider).